Reading from the N-terminus, the 217-residue chain is 3-oxoadipate CoA-transferase subunit B (217 aa).

Residue glutamate 50 is part of the active site.

This sequence belongs to the 3-oxoacid CoA-transferase subunit B family. As to quaternary structure, heterodimer.

It carries out the reaction 3-oxoadipate + succinyl-CoA = 3-oxoadipyl-CoA + succinate. It participates in aromatic compound metabolism; beta-ketoadipate pathway; acetyl-CoA and succinyl-CoA from 3-oxoadipate: step 1/2. This Acinetobacter baylyi (strain ATCC 33305 / BD413 / ADP1) protein is 3-oxoadipate CoA-transferase subunit B (pcaJ).